The sequence spans 126 residues: Large ribosomal subunit protein bL12 (126 aa).

Belongs to the bacterial ribosomal protein bL12 family. Homodimer. Part of the ribosomal stalk of the 50S ribosomal subunit. Forms a multimeric L10(L12)X complex, where L10 forms an elongated spine to which 2 to 4 L12 dimers bind in a sequential fashion. Binds GTP-bound translation factors.

In terms of biological role, forms part of the ribosomal stalk which helps the ribosome interact with GTP-bound translation factors. Is thus essential for accurate translation. This Geobacter sp. (strain M21) protein is Large ribosomal subunit protein bL12.